The sequence spans 227 residues: UPF0758 protein Pcryo_2119 (227 aa).

Positions 102–224 constitute an MPN domain; that stretch reads GLGRSQMVKD…TLSYAENSLP (123 aa). Zn(2+) contacts are provided by histidine 173, histidine 175, and aspartate 186. Positions 173–186 match the JAMM motif motif; that stretch reads HNHPHTDAKPSTAD.

It belongs to the UPF0758 family.

The polypeptide is UPF0758 protein Pcryo_2119 (Psychrobacter cryohalolentis (strain ATCC BAA-1226 / DSM 17306 / VKM B-2378 / K5)).